Consider the following 193-residue polypeptide: ECF RNA polymerase sigma factor SigK (193 aa).

Residues Leu-35 to Glu-101 are sigma-70 factor domain-2. A Polymerase core binding motif is present at residues Glu-59–Gln-62. The sigma-70 factor domain-4 stretch occupies residues Met-140–Lys-187. A DNA-binding region (H-T-H motif) is located at residues Tyr-161–Arg-180.

Belongs to the sigma-70 factor family. ECF subfamily. In terms of assembly, interacts transiently with the RNA polymerase catalytic core formed by RpoA, RpoB, RpoC and RpoZ (2 alpha, 1 beta, 1 beta' and 1 omega subunit) to form the RNA polymerase holoenzyme that can initiate transcription. Interacts (via sigma-70 factor domain 4) with anti-sigma-K factor RskA.

Its function is as follows. Sigma factors are initiation factors that promote the attachment of RNA polymerase to specific initiation sites and are then released. Extracytoplasmic function (ECF) sigma factors are held in an inactive form by an anti-sigma factor until released by regulated intramembrane proteolysis. The polypeptide is ECF RNA polymerase sigma factor SigK (sigK) (Mycobacterium sp. (strain JLS)).